The primary structure comprises 332 residues: Transaldolase (332 aa).

Lys135 functions as the Schiff-base intermediate with substrate in the catalytic mechanism.

This sequence belongs to the transaldolase family. Type 1 subfamily. As to quaternary structure, homodimer.

The protein localises to the cytoplasm. The enzyme catalyses D-sedoheptulose 7-phosphate + D-glyceraldehyde 3-phosphate = D-erythrose 4-phosphate + beta-D-fructose 6-phosphate. Its pathway is carbohydrate degradation; pentose phosphate pathway; D-glyceraldehyde 3-phosphate and beta-D-fructose 6-phosphate from D-ribose 5-phosphate and D-xylulose 5-phosphate (non-oxidative stage): step 2/3. Functionally, transaldolase is important for the balance of metabolites in the pentose-phosphate pathway. The chain is Transaldolase from Prochlorococcus marinus (strain NATL2A).